The sequence spans 842 residues: Unconventional myosin-Ia (842 aa).

Positions 1-686 (GVEDLILLEP…TLFYLEEQRR (686 aa)) constitute a Myosin motor domain. ATP is bound at residue 93–100 (GESGAGKT). The tract at residues 563–585 (VAILMKNLYSKNPNYIRCIKPND) is actin-binding. IQ domains lie at 689-712 (LQQL…YQQM), 713-733 (RKSQ…KHYG), and 735-764 (IRSS…SGAR).

This sequence belongs to the TRAFAC class myosin-kinesin ATPase superfamily. Myosin family. In terms of processing, phosphorylated by ALPK1.

Its function is as follows. Involved in directing the movement of organelles along actin filaments. In Rattus norvegicus (Rat), this protein is Unconventional myosin-Ia (Myo1a).